The sequence spans 381 residues: L-lactate dehydrogenase A-like 6B (381 aa).

Residues 101–106 (DLDEDK) and Arg148 each bind NAD(+). Substrate is bound by residues Arg155, Asn187, and Arg218. Residue Asn187 coordinates NAD(+). His242 acts as the Proton acceptor in catalysis. Residue Thr297 participates in substrate binding.

Belongs to the LDH/MDH superfamily. LDH family. As to expression, testis specific.

The catalysed reaction is (S)-lactate + NAD(+) = pyruvate + NADH + H(+). It functions in the pathway fermentation; pyruvate fermentation to lactate; (S)-lactate from pyruvate: step 1/1. The protein is L-lactate dehydrogenase A-like 6B (LDHAL6B) of Homo sapiens (Human).